A 537-amino-acid chain; its full sequence is Phosphoenolpyruvate carboxykinase (ATP) (537 aa).

Substrate is bound by residues Arg61, Tyr195, and Lys201. ATP contacts are provided by residues Lys201, His220, and 236–244 (GLSGTGKTT). Mn(2+) is bound by residues Lys201 and His220. Asp257 contacts Mn(2+). Glu285, Arg323, and Thr448 together coordinate ATP. Residue Arg323 coordinates substrate.

The protein belongs to the phosphoenolpyruvate carboxykinase (ATP) family. It depends on Mn(2+) as a cofactor.

It localises to the cytoplasm. The enzyme catalyses oxaloacetate + ATP = phosphoenolpyruvate + ADP + CO2. Its pathway is carbohydrate biosynthesis; gluconeogenesis. Involved in the gluconeogenesis. Catalyzes the conversion of oxaloacetate (OAA) to phosphoenolpyruvate (PEP) through direct phosphoryl transfer between the nucleoside triphosphate and OAA. This chain is Phosphoenolpyruvate carboxykinase (ATP), found in Rhodopseudomonas palustris (strain HaA2).